A 61-amino-acid polypeptide reads, in one-letter code: Large ribosomal subunit protein bL32 (61 aa).

Residues 1 to 22 (MAVPKQKSSKSRGRKRRTHQKV) form a disordered region. The span at 7–20 (KSSKSRGRKRRTHQ) shows a compositional bias: basic residues.

It belongs to the bacterial ribosomal protein bL32 family.

This is Large ribosomal subunit protein bL32 from Desulforapulum autotrophicum (strain ATCC 43914 / DSM 3382 / VKM B-1955 / HRM2) (Desulfobacterium autotrophicum).